The primary structure comprises 664 residues: DNA ligase (664 aa).

Residues 32–36, 81–82, and glutamate 113 each bind NAD(+); these read DAEYD and SL. Lysine 115 acts as the N6-AMP-lysine intermediate in catalysis. Residues arginine 136, glutamate 173, lysine 289, and lysine 313 each coordinate NAD(+). Cysteine 407, cysteine 410, cysteine 425, and cysteine 431 together coordinate Zn(2+). A BRCT domain is found at 586–664; the sequence is ASEQPFAGKT…EEQLQAALQS (79 aa).

It belongs to the NAD-dependent DNA ligase family. LigA subfamily. It depends on Mg(2+) as a cofactor. The cofactor is Mn(2+).

It carries out the reaction NAD(+) + (deoxyribonucleotide)n-3'-hydroxyl + 5'-phospho-(deoxyribonucleotide)m = (deoxyribonucleotide)n+m + AMP + beta-nicotinamide D-nucleotide.. Functionally, DNA ligase that catalyzes the formation of phosphodiester linkages between 5'-phosphoryl and 3'-hydroxyl groups in double-stranded DNA using NAD as a coenzyme and as the energy source for the reaction. It is essential for DNA replication and repair of damaged DNA. This is DNA ligase from Aeromonas salmonicida (strain A449).